The following is a 406-amino-acid chain: MSLIRVNGEAFKLSLESLEEDPFETKETLETLIKQTSVVLLAAGESRRFSQTIKKQWLRSNHTPLWLSVYESFKEALDFKEIILVVSELDYIYIKRHYPEIKLVKGGASRQESVRNALKIIDSAYTLTSDVARGLANIEALKNLFLTLQQTSHYCIAPYLPCYDTAIYYNEALDREAIKLIQTPQLSHTKALQSALNQGDFKDESSAILQAFPDRVSYIEGSKDLHKLTTSGDLKHFTLFFNPAKDTFIGMGFDTHAFIKDKPMVLGGVVLDCEFGLKAHSDGDALLHAVIDAILGAIKGGDIGEWFPDNDPKYKNASSKELLKIVLDFSQSIGFELFEMGATIFSEIPKITPYKPAILENLSQLLGLEKSQISLKATTMEKMGFIGKQEGLLVQAHVSMRYKQKL.

The 2-C-methyl-D-erythritol 4-phosphate cytidylyltransferase stretch occupies residues 1-247; the sequence is MSLIRVNGEA…TLFFNPAKDT (247 aa). The 2-C-methyl-D-erythritol 2,4-cyclodiphosphate synthase stretch occupies residues 248 to 406; the sequence is FIGMGFDTHA…HVSMRYKQKL (159 aa). Residues Asp254 and His256 each contribute to the a divalent metal cation site. 4-CDP-2-C-methyl-D-erythritol 2-phosphate contacts are provided by residues 254–256 and 280–281; these read DTH and HS. His288 is a binding site for a divalent metal cation. 4-CDP-2-C-methyl-D-erythritol 2-phosphate-binding positions include 302–304, 307–311, 378–381, Phe385, and Lys388; these read DIG, FPDND, and TTME.

This sequence in the N-terminal section; belongs to the IspD/TarI cytidylyltransferase family. IspD subfamily. It in the C-terminal section; belongs to the IspF family. A divalent metal cation is required as a cofactor.

It catalyses the reaction 2-C-methyl-D-erythritol 4-phosphate + CTP + H(+) = 4-CDP-2-C-methyl-D-erythritol + diphosphate. The catalysed reaction is 4-CDP-2-C-methyl-D-erythritol 2-phosphate = 2-C-methyl-D-erythritol 2,4-cyclic diphosphate + CMP. It functions in the pathway isoprenoid biosynthesis; isopentenyl diphosphate biosynthesis via DXP pathway; isopentenyl diphosphate from 1-deoxy-D-xylulose 5-phosphate: step 2/6. The protein operates within isoprenoid biosynthesis; isopentenyl diphosphate biosynthesis via DXP pathway; isopentenyl diphosphate from 1-deoxy-D-xylulose 5-phosphate: step 4/6. In terms of biological role, bifunctional enzyme that catalyzes the formation of 4-diphosphocytidyl-2-C-methyl-D-erythritol from CTP and 2-C-methyl-D-erythritol 4-phosphate (MEP) (IspD), and catalyzes the conversion of 4-diphosphocytidyl-2-C-methyl-D-erythritol 2-phosphate (CDP-ME2P) to 2-C-methyl-D-erythritol 2,4-cyclodiphosphate (ME-CPP) with a corresponding release of cytidine 5-monophosphate (CMP) (IspF). This chain is Bifunctional enzyme IspD/IspF, found in Helicobacter pylori (strain ATCC 700392 / 26695) (Campylobacter pylori).